The chain runs to 292 residues: Ribosomal protein L11 methyltransferase (292 aa).

Positions 138, 159, 181, and 225 each coordinate S-adenosyl-L-methionine.

This sequence belongs to the methyltransferase superfamily. PrmA family.

The protein localises to the cytoplasm. It carries out the reaction L-lysyl-[protein] + 3 S-adenosyl-L-methionine = N(6),N(6),N(6)-trimethyl-L-lysyl-[protein] + 3 S-adenosyl-L-homocysteine + 3 H(+). In terms of biological role, methylates ribosomal protein L11. The protein is Ribosomal protein L11 methyltransferase of Leuconostoc citreum (strain KM20).